A 364-amino-acid polypeptide reads, in one-letter code: DNA replication and repair protein RecF (364 aa).

33 to 40 contacts ATP; sequence GENGSGKT.

This sequence belongs to the RecF family.

It localises to the cytoplasm. In terms of biological role, the RecF protein is involved in DNA metabolism; it is required for DNA replication and normal SOS inducibility. RecF binds preferentially to single-stranded, linear DNA. It also seems to bind ATP. This is DNA replication and repair protein RecF from Rickettsia felis (strain ATCC VR-1525 / URRWXCal2) (Rickettsia azadi).